The following is a 557-amino-acid chain: Leucine-rich glioma-inactivated protein 1 (557 aa).

Positions 1–34 (MESESSRRMGNACIPLKRIAYFLCLFSVVLLTEG) are cleaved as a signal peptide. The LRRNT domain occupies 35–72 (KKPAKPKCPAVCTCSKDNALCENARSIPRTVPPDVISL). 3 LRR repeats span residues 92–113 (SLQLLLFTSNSFDVISDDAFIG), 116–137 (HLEYLFIENNNIKSISRHTFRG), and 140–161 (SLIHLSLANNNLQTLPKDIFKG). Residues 173-223 (NAFNCDCKLKWLVEWLGHTNATVEDIYCEGPPEYKKRKINSLSPKDFDCII) form the LRRCT domain. Asn-192 carries N-linked (GlcNAc...) asparagine glycosylation. 7 EAR repeats span residues 225-267 (EFAK…EWDH), 271-313 (TFRN…KRDG), 317-364 (KFIK…KWNG), 366-415 (GFYS…QWSK), 419-462 (LFTN…KWGG), 464-506 (SFQD…NWDA), and 510-552 (KFVK…KHVI). Residue Asn-277 is glycosylated (N-linked (GlcNAc...) asparagine). The N-linked (GlcNAc...) asparagine glycan is linked to Asn-422.

Oligomer. Interacts with KCNA1 within a complex containing KCNA1, KCNA4 and KCNAB1. Part of a complex containing ADAM22, DLG4/PSD95 and CACNG2 (stargazin). Can bind to ADAM11 and ADAM23. Glycosylated. In terms of tissue distribution, expressed in the brain (at protein level). Expressed in cerebellar cortex basket cell terminals (at protein level). Highly expressed in the dentate gyrus and CA3 field of the hippocampus.

The protein resides in the secreted. The protein localises to the synapse. It is found in the cytoplasm. Its subcellular location is the golgi apparatus. It localises to the endoplasmic reticulum. Functionally, regulates voltage-gated potassium channels assembled from KCNA1, KCNA4 and KCNAB1. It slows down channel inactivation by precluding channel closure mediated by the KCNAB1 subunit. Ligand for ADAM22 that positively regulates synaptic transmission mediated by AMPA-type glutamate receptors. Plays a role in suppressing the production of MMP1/3 through the phosphatidylinositol 3-kinase/ERK pathway. The chain is Leucine-rich glioma-inactivated protein 1 from Mus musculus (Mouse).